A 328-amino-acid chain; its full sequence is Methionyl-tRNA formyltransferase (328 aa).

110 to 113 is a (6S)-5,6,7,8-tetrahydrofolate binding site; sequence SLLP.

It belongs to the Fmt family.

The catalysed reaction is L-methionyl-tRNA(fMet) + (6R)-10-formyltetrahydrofolate = N-formyl-L-methionyl-tRNA(fMet) + (6S)-5,6,7,8-tetrahydrofolate + H(+). In terms of biological role, attaches a formyl group to the free amino group of methionyl-tRNA(fMet). The formyl group appears to play a dual role in the initiator identity of N-formylmethionyl-tRNA by promoting its recognition by IF2 and preventing the misappropriation of this tRNA by the elongation apparatus. In Prochlorococcus marinus subsp. pastoris (strain CCMP1986 / NIES-2087 / MED4), this protein is Methionyl-tRNA formyltransferase.